The following is a 126-amino-acid chain: UPF0235 protein C15orf40 homolog (126 aa).

A disordered region spans residues 1–33 (MPKKAGATSKGKNQTKEPETPPPPTGPVATDSK). Ser89 is modified (phosphoserine).

The protein belongs to the UPF0235 family.

In Rattus norvegicus (Rat), this protein is UPF0235 protein C15orf40 homolog.